Reading from the N-terminus, the 983-residue chain is Type IV secretion system protein CagE (983 aa).

597-604 (GSTGSGKT) lines the ATP pocket.

Belongs to the TrbE/VirB4 family. Component of the Cag type IV secretion system, which is composed of a wheel-shaped outer membrane complex (OMC) and an inner membrane complex (IMC). Interacts with CagV and CagBeta.

The protein localises to the cell inner membrane. It carries out the reaction ATP + H2O + cellular proteinSide 1 = ADP + phosphate + cellular proteinSide 2.. In terms of biological role, ATPase component of the type IV secretion system Cag (Cag-T4SS). Acts as a molecular motor to provide the energy that is required for the export of proteins. Required for CagA translocation and induction of IL-8 in host gastric epithelial cells. Plays a key role in Cag-T4SS pilus biogenesis, especially in the localization and stabilization of the pilus-associated components CagI, CagL and the surface protein CagH. Is also critical for assembly of the entire cytoplasmic portion of the Cag inner membrane complex (IMC). This Helicobacter pylori (strain ATCC 700392 / 26695) (Campylobacter pylori) protein is Type IV secretion system protein CagE.